Here is a 485-residue protein sequence, read N- to C-terminus: Retron Mx162 reverse transcriptase (485 aa).

The disordered stretch occupies residues 1–33 (MTARLDPFVPAASPQAVPTPELTAPSSDAAAKR). The Reverse transcriptase domain maps to 167–407 (RWFAFHREVD…TRQRVTGLVV (241 aa)). The Mg(2+) site is built by Asp-250, Asp-346, and Asp-347.

The protein belongs to the bacterial reverse transcriptase family.

It catalyses the reaction DNA(n) + a 2'-deoxyribonucleoside 5'-triphosphate = DNA(n+1) + diphosphate. With respect to regulation, msDNA synthesis is inhibited by rifampicin and chloramphenicol. Its function is as follows. Reverse transcriptase (RT) responsible for synthesis of msDNA-Mx162 (a branched molecule with RNA linked by a 2',5'-phosphodiester bond to ssDNA). The retron transcript serves as primer (from a conserved internal G residue) and template for the reaction, and codes for the RT. The retron is involved in antiviral defense. The chain is Retron Mx162 reverse transcriptase from Myxococcus xanthus.